The primary structure comprises 142 residues: HTH-type transcriptional regulator MntR (142 aa).

An HTH dtxR-type domain is found at 1 to 63 (MPTPSMEDYI…YEKYRGLILT (63 aa)). 6 residues coordinate Mn(2+): aspartate 8, glutamate 11, histidine 77, glutamate 99, glutamate 102, and histidine 103.

Belongs to the DtxR/MntR family. As to quaternary structure, homodimer.

The protein localises to the cytoplasm. With respect to regulation, DNA binding is strongly activated by Mn(2+). Functionally, central regulator of manganese homeostasis. This is HTH-type transcriptional regulator MntR from Listeria monocytogenes serotype 4b (strain F2365).